The chain runs to 388 residues: Methylthioribose-1-phosphate isomerase (388 aa).

Residue aspartate 258 is the Proton donor of the active site.

It belongs to the eIF-2B alpha/beta/delta subunits family. MtnA subfamily.

Its subcellular location is the cytoplasm. The protein localises to the nucleus. It carries out the reaction 5-(methylsulfanyl)-alpha-D-ribose 1-phosphate = 5-(methylsulfanyl)-D-ribulose 1-phosphate. It participates in amino-acid biosynthesis; L-methionine biosynthesis via salvage pathway; L-methionine from S-methyl-5-thio-alpha-D-ribose 1-phosphate: step 1/6. In terms of biological role, catalyzes the interconversion of methylthioribose-1-phosphate (MTR-1-P) into methylthioribulose-1-phosphate (MTRu-1-P). The sequence is that of Methylthioribose-1-phosphate isomerase from Sordaria macrospora (strain ATCC MYA-333 / DSM 997 / K(L3346) / K-hell).